The following is a 156-amino-acid chain: Large ribosomal subunit protein uL30 (156 aa).

It belongs to the universal ribosomal protein uL30 family. As to quaternary structure, part of the 50S ribosomal subunit.

The polypeptide is Large ribosomal subunit protein uL30 (Thermofilum pendens (strain DSM 2475 / Hrk 5)).